Here is a 115-residue protein sequence, read N- to C-terminus: Urease subunit beta (115 aa).

It belongs to the urease beta subunit family. In terms of assembly, heterotrimer of UreA (gamma), UreB (beta) and UreC (alpha) subunits. Three heterotrimers associate to form the active enzyme.

The protein localises to the cytoplasm. It catalyses the reaction urea + 2 H2O + H(+) = hydrogencarbonate + 2 NH4(+). Its pathway is nitrogen metabolism; urea degradation; CO(2) and NH(3) from urea (urease route): step 1/1. The sequence is that of Urease subunit beta from Arthrobacter sp. (strain FB24).